The primary structure comprises 286 residues: Protein HEXIM2 (286 aa).

Over residues 1–11 (MMATPNQTACN) the composition is skewed to polar residues. The segment at 1–195 (MMATPNQTAC…GEFQRKDFSE (195 aa)) is disordered. Serine 29 carries the phosphoserine modification. Phosphothreonine is present on threonine 32. Position 39 is a phosphoserine (serine 39). Threonine 46 is subject to Phosphothreonine. A phosphoserine mark is found at serine 51, serine 53, serine 71, serine 76, and serine 81. The segment covering 68–78 (NSRSPRTQSPG) has biased composition (polar residues). A compositionally biased stretch (basic residues) spans 87–103 (ARKKHRRRPSKRKRHWR). Residues 113-132 (KQQRDERQSQRASRVREEMF) are compositionally biased toward basic and acidic residues. The segment at 140 to 143 (PYNT) is interaction with P-TEFb. Residues 178–195 (SDGRGRAHGEFQRKDFSE) show a composition bias toward basic and acidic residues. The stretch at 207 to 277 (GRSKQELVRD…QENQMWNREG (71 aa)) forms a coiled coil. The interaction with CCNT1, HEXIM1 and HEXIM2 stretch occupies residues 226–286 (QAEEETRRLQ…GCRCDEEPGT (61 aa)).

This sequence belongs to the HEXIM family. As to quaternary structure, homooligomer and heterooligomer with HEXIM1; probably dimeric. Core component of the 7SK RNP complex, at least composed of 7SK RNA, LARP7, MEPCE, HEXIM1 (or HEXIM2) and P-TEFb (composed of CDK9 and CCNT1/cyclin-T1). Interacts with CCNT2. In terms of tissue distribution, ubiquitously expressed with higher expression in testis. HEXIM1 and HEXIM2 are differentially expressed.

Its subcellular location is the nucleus. In terms of biological role, transcriptional regulator which functions as a general RNA polymerase II transcription inhibitor. Core component of the 7SK RNP complex: in cooperation with 7SK snRNA sequesters P-TEFb in a large inactive 7SK snRNP complex preventing RNA polymerase II phosphorylation and subsequent transcriptional elongation. This is Protein HEXIM2 (HEXIM2) from Homo sapiens (Human).